A 264-amino-acid chain; its full sequence is 3-methyl-2-oxobutanoate hydroxymethyltransferase (264 aa).

The Mg(2+) site is built by aspartate 45 and aspartate 84. 3-methyl-2-oxobutanoate-binding positions include 45–46 (DS), aspartate 84, and lysine 112. Glutamate 114 contacts Mg(2+). Glutamate 181 serves as the catalytic Proton acceptor.

This sequence belongs to the PanB family. Homodecamer; pentamer of dimers. Mg(2+) is required as a cofactor.

It localises to the cytoplasm. The enzyme catalyses 3-methyl-2-oxobutanoate + (6R)-5,10-methylene-5,6,7,8-tetrahydrofolate + H2O = 2-dehydropantoate + (6S)-5,6,7,8-tetrahydrofolate. Its pathway is cofactor biosynthesis; (R)-pantothenate biosynthesis; (R)-pantoate from 3-methyl-2-oxobutanoate: step 1/2. In terms of biological role, catalyzes the reversible reaction in which hydroxymethyl group from 5,10-methylenetetrahydrofolate is transferred onto alpha-ketoisovalerate to form ketopantoate. This is 3-methyl-2-oxobutanoate hydroxymethyltransferase from Shigella flexneri serotype 5b (strain 8401).